A 393-amino-acid chain; its full sequence is MAAVTVEAIRKAQRADGPAAVLAIGTATPANYVTQADYPDYYFRITKSEHMTELKEKFKRMCDKSMIRKRYMHLTEDILKENPNMCAYMAPSLDARQDIVVVEVPKLGKEAAVKAIKEWGQPKSKITHLIFCTTSGVDMPGCDYQLTKLLGLRPSVKRFMMYQQGCFAGGTVLRLAKDLAENNRGARVLVVCSEITAVTFRGPADTHLDSLVGQALFGDGAAAVIVGADPDESIERPLYQLVSAAQTILPDSDGAIDGHLREVGLTFHLLKDVPGLISKNIEKSLKEAFGPIGISDWNSIFWIAHPGGPAILDQVEAKLGLKEEKLRATRQVLSEYGNMSSACVLFILDEMRKNCAEEGRATTGEGLDWGVLFGFGPGLTVETVVLRSVPIKA.

Residue Cys-166 is part of the active site.

The protein belongs to the thiolase-like superfamily. Chalcone/stilbene synthases family.

It carries out the reaction (E)-4-coumaroyl-CoA + 3 malonyl-CoA + 3 H(+) = 2',4,4',6'-tetrahydroxychalcone + 3 CO2 + 4 CoA. It functions in the pathway secondary metabolite biosynthesis; flavonoid biosynthesis. Its function is as follows. The primary product of this enzyme is 4,2',4',6'-tetrahydroxychalcone (also termed naringenin-chalcone or chalcone) which can under specific conditions spontaneously isomerize into naringenin. This is Chalcone synthase 1 (CHS1) from Ruta graveolens (Common rue).